Reading from the N-terminus, the 145-residue chain is MIRSKRKINKLRGSRSNGGGCTKKRRGAGNKGGRGNAGASKQHWTWTAKFDPDHYGKHGFKRPQKMIKKVNPVNLSYLEEQADNLIESGKASKDGDSIVIDVTELGYDKVLAKGKITKSFIISAPQFSASAIEKIEEMGGEAIEL.

Residues M1–G13 are compositionally biased toward basic residues. Residues M1–W44 form a disordered region.

This sequence belongs to the universal ribosomal protein uL15 family. As to quaternary structure, part of the 50S ribosomal subunit.

Its function is as follows. Binds to the 23S rRNA. The polypeptide is Large ribosomal subunit protein uL15 (Methanobrevibacter smithii (strain ATCC 35061 / DSM 861 / OCM 144 / PS)).